A 424-amino-acid polypeptide reads, in one-letter code: ATP-dependent RNA helicase WM6 (424 aa).

Positions 1–16 are enriched in acidic residues; the sequence is MADNDDLLDYEDEEQT. The disordered stretch occupies residues 1–27; it reads MADNDDLLDYEDEEQTETTAVENQEAP. The short motif at 41 to 69 is the Q motif element; sequence SGFRDFLLKPEILRAIVDCGFEHPSEVQH. Positions 72-246 constitute a Helicase ATP-binding domain; it reads IPQAVLGMDI…KKFMQDPMEV (175 aa). 85–92 contacts ATP; it reads AKSGMGKT. The DECD box motif lies at 193-196; it reads DECD. A Helicase C-terminal domain is found at 258 to 419; that stretch reads GLQQHYVNLK…ELPEEIDLST (162 aa).

This sequence belongs to the DEAD box helicase family. DECD subfamily. As to quaternary structure, component of the spliceosome. Interacts with the exon junction complex.

The protein localises to the nucleus speckle. The enzyme catalyses ATP + H2O = ADP + phosphate + H(+). Required for mRNA export out of the nucleus. Probable RNA helicase that may regulate entry into mitosis by down-regulating the expression of other genes whose activity may be rate-limiting for entry into mitosis during embryogenesis. Binds to salivary gland chromosomes and modifies position effect variegation. Promotes an open chromatin structure that favors transcription during development by regulating the spread of heterochromatin. This Drosophila melanogaster (Fruit fly) protein is ATP-dependent RNA helicase WM6 (Hel25E).